The chain runs to 593 residues: Copine-5 (593 aa).

In terms of domain architecture, C2 1 spans 2 to 134 (EQPEDMASLS…SPGSRLEKPL (133 aa)). Ser-19 carries the phosphoserine modification. Asp-38, Asp-44, Asp-98, Asp-100, Ser-103, Lys-108, and Asp-110 together coordinate Ca(2+). Residue Ser-103 is modified to Phosphoserine. Residue Ser-140 is modified to Phosphoserine. In terms of domain architecture, C2 2 spans 161–284 (KCGTIILSAE…ARGQSQFNIY (124 aa)). Ca(2+) contacts are provided by Asp-192, Asp-198, Asp-254, Asp-256, and Asp-262. Positions 328 to 554 (NFTVAIDFTA…DVLAEIPDQL (227 aa)) constitute a VWFA domain. The disordered stretch occupies residues 562–593 (GIRPRPPPAAPTHSPSQSPARTPPASPLHTHI). Over residues 572–581 (PTHSPSQSPA) the composition is skewed to low complexity.

It belongs to the copine family. Ca(2+) serves as cofactor. As to expression, expressed in the brain, heart, stomach, spleen, lymph node and testis. Expressed in melanocytes.

Its subcellular location is the perikaryon. The protein resides in the cell projection. Probable calcium-dependent phospholipid-binding protein that may play a role in calcium-mediated intracellular processes. Plays a role in dendrite formation by melanocytes. This Homo sapiens (Human) protein is Copine-5.